A 407-amino-acid chain; its full sequence is Queuine tRNA-ribosyltransferase-like protein (407 aa).

The protein belongs to the queuine tRNA-ribosyltransferase family.

The chain is Queuine tRNA-ribosyltransferase-like protein from Plasmodium falciparum (isolate 3D7).